Here is a 558-residue protein sequence, read N- to C-terminus: Formate--tetrahydrofolate ligase (558 aa).

Residue 66-73 (TPAGEGKT) participates in ATP binding.

Belongs to the formate--tetrahydrofolate ligase family.

The enzyme catalyses (6S)-5,6,7,8-tetrahydrofolate + formate + ATP = (6R)-10-formyltetrahydrofolate + ADP + phosphate. It functions in the pathway one-carbon metabolism; tetrahydrofolate interconversion. This is Formate--tetrahydrofolate ligase from Neisseria meningitidis serogroup C / serotype 2a (strain ATCC 700532 / DSM 15464 / FAM18).